The following is a 157-amino-acid chain: Protein Smg homolog (157 aa).

It belongs to the Smg family.

The sequence is that of Protein Smg homolog from Tolumonas auensis (strain DSM 9187 / NBRC 110442 / TA 4).